We begin with the raw amino-acid sequence, 657 residues long: tRNA 5-methylaminomethyl-2-thiouridine biosynthesis bifunctional protein MnmC (657 aa).

Residues 1–233 are tRNA (mnm(5)s(2)U34)-methyltransferase; it reads MPRGLILATP…KRDMTVAAFP (233 aa). The FAD-dependent cmnm(5)s(2)U34 oxidoreductase stretch occupies residues 256–657; the sequence is LGAGLAGCSV…RALRHGKHAA (402 aa).

It in the N-terminal section; belongs to the methyltransferase superfamily. tRNA (mnm(5)s(2)U34)-methyltransferase family. In the C-terminal section; belongs to the DAO family. FAD is required as a cofactor.

The protein resides in the cytoplasm. It catalyses the reaction 5-aminomethyl-2-thiouridine(34) in tRNA + S-adenosyl-L-methionine = 5-methylaminomethyl-2-thiouridine(34) in tRNA + S-adenosyl-L-homocysteine + H(+). Functionally, catalyzes the last two steps in the biosynthesis of 5-methylaminomethyl-2-thiouridine (mnm(5)s(2)U) at the wobble position (U34) in tRNA. Catalyzes the FAD-dependent demodification of cmnm(5)s(2)U34 to nm(5)s(2)U34, followed by the transfer of a methyl group from S-adenosyl-L-methionine to nm(5)s(2)U34, to form mnm(5)s(2)U34. The sequence is that of tRNA 5-methylaminomethyl-2-thiouridine biosynthesis bifunctional protein MnmC from Ralstonia nicotianae (strain ATCC BAA-1114 / GMI1000) (Ralstonia solanacearum).